Reading from the N-terminus, the 137-residue chain is Ribosomal RNA large subunit methyltransferase H (137 aa).

S-adenosyl-L-methionine is bound by residues leucine 56, glycine 85, and 104–109; that span reads LSPLTF.

Belongs to the RNA methyltransferase RlmH family. As to quaternary structure, homodimer.

Its subcellular location is the cytoplasm. The enzyme catalyses pseudouridine(1915) in 23S rRNA + S-adenosyl-L-methionine = N(3)-methylpseudouridine(1915) in 23S rRNA + S-adenosyl-L-homocysteine + H(+). Functionally, specifically methylates the pseudouridine at position 1915 (m3Psi1915) in 23S rRNA. This Prochlorococcus marinus subsp. pastoris (strain CCMP1986 / NIES-2087 / MED4) protein is Ribosomal RNA large subunit methyltransferase H.